Consider the following 495-residue polypeptide: Bile acid-sensitive ion channel (495 aa).

The tract at residues 1–30 is binds the plasma membrane and stabilizes the channel in the closed state; sequence MEHTEKSQVHAEKGLLGKIKRYLSKRPLPS. Residues 1–61 lie on the Cytoplasmic side of the membrane; that stretch reads MEHTEKSQVH…NIAQNQNKVR (61 aa). A helical transmembrane segment spans residues 62–82; that stretch reads KVIWLAVVLGSVSLLVWQIYS. Residues 83–459 lie on the Extracellular side of the membrane; the sequence is RLVNYFTWPT…GLFCGASLIT (377 aa). Intrachain disulfides connect Cys-112–Cys-207, Cys-185–Cys-192, Cys-298–Cys-377, Cys-315–Cys-373, Cys-328–Cys-350, and Cys-330–Cys-342. N-linked (GlcNAc...) asparagine glycosylation is found at Asn-147, Asn-163, and Asn-179. Asn-370, Asn-405, and Asn-421 each carry an N-linked (GlcNAc...) asparagine glycan. Residues 454–456 carry the GAS motif; ion selectivity filter motif; it reads GAS. A helical transmembrane segment spans residues 460–480; sequence IIEIIEYFFTNFYWVLIFFLL. Residues 481-495 lie on the Cytoplasmic side of the membrane; the sequence is KILETIQRTSPPQAV.

The protein belongs to the amiloride-sensitive sodium channel (TC 1.A.6) family. ASIC5 subfamily. As to quaternary structure, forms homotrimeric channels. In terms of tissue distribution, expressed by cholangiocytes (at protein level). Detected in cerebellum, brainstem, kidney, liver, hepatocytes, lung, intestine and embryo. In the cerebellum, restricted to interneurons in the granular layer, specifically in GRM1-expressing unipolar brush cells of the vestibulocerebellum.

It is found in the apical cell membrane. It localises to the cell membrane. It carries out the reaction Na(+)(in) = Na(+)(out). The enzyme catalyses Li(+)(in) = Li(+)(out). It catalyses the reaction K(+)(in) = K(+)(out). The catalysed reaction is H(+)(in) = H(+)(out). With respect to regulation, inhibited by the diuretic drug amiloride. Contrary to its rat ortholog it is not inhibited by Ca(2+). Functionally, forms bile acid-gated sodium channels and may play a role in bile acid-dependent absorption and secretion by epithelial cells of the bile ducts. Displays high selectivity for sodium ions but can also permit the permeation of other cations. The gating could be indirect and the consequence of alterations of the membrane environment of the channel by bile acids. As a sodium channel of type II unipolar brush cells of the vestibulocerebellum, controlling the electrical activity of these cells, could play a role in motor coordination and balance. This is Bile acid-sensitive ion channel from Mus musculus (Mouse).